The sequence spans 136 residues: Large ribosomal subunit protein uL22 (136 aa).

This sequence belongs to the universal ribosomal protein uL22 family. Part of the 50S ribosomal subunit.

This protein binds specifically to 23S rRNA; its binding is stimulated by other ribosomal proteins, e.g. L4, L17, and L20. It is important during the early stages of 50S assembly. It makes multiple contacts with different domains of the 23S rRNA in the assembled 50S subunit and ribosome. Functionally, the globular domain of the protein is located near the polypeptide exit tunnel on the outside of the subunit, while an extended beta-hairpin is found that lines the wall of the exit tunnel in the center of the 70S ribosome. This chain is Large ribosomal subunit protein uL22, found in Parabacteroides distasonis (strain ATCC 8503 / DSM 20701 / CIP 104284 / JCM 5825 / NCTC 11152).